Consider the following 235-residue polypeptide: Purine nucleoside phosphorylase DeoD-type (235 aa).

Histidine 4 is an a purine D-ribonucleoside binding site. Phosphate contacts are provided by residues glycine 20, arginine 24, arginine 43, and arginine 87–threonine 90. A purine D-ribonucleoside is bound by residues glutamate 162, glutamate 179–glutamate 181, and serine 203–aspartate 204. Aspartate 204 acts as the Proton donor in catalysis.

Belongs to the PNP/UDP phosphorylase family. As to quaternary structure, homohexamer; trimer of homodimers.

It carries out the reaction a purine D-ribonucleoside + phosphate = a purine nucleobase + alpha-D-ribose 1-phosphate. The catalysed reaction is a purine 2'-deoxy-D-ribonucleoside + phosphate = a purine nucleobase + 2-deoxy-alpha-D-ribose 1-phosphate. In terms of biological role, catalyzes the reversible phosphorolytic breakdown of the N-glycosidic bond in the beta-(deoxy)ribonucleoside molecules, with the formation of the corresponding free purine bases and pentose-1-phosphate. This Bacillus cytotoxicus (strain DSM 22905 / CIP 110041 / 391-98 / NVH 391-98) protein is Purine nucleoside phosphorylase DeoD-type.